A 68-amino-acid chain; its full sequence is Probable tautomerase jhp_0858 (68 aa).

The active-site Proton acceptor; via imino nitrogen is Pro-2.

It belongs to the 4-oxalocrotonate tautomerase family.

The polypeptide is Probable tautomerase jhp_0858 (Helicobacter pylori (strain J99 / ATCC 700824) (Campylobacter pylori J99)).